Reading from the N-terminus, the 406-residue chain is Peptidase T (406 aa).

His81 serves as a coordination point for Zn(2+). The active site involves Asp83. Asp142 contributes to the Zn(2+) binding site. The Proton acceptor role is filled by Glu176. Zn(2+) is bound by residues Glu177, Asp199, and His381.

It belongs to the peptidase M20B family. It depends on Zn(2+) as a cofactor.

The protein localises to the cytoplasm. The catalysed reaction is Release of the N-terminal residue from a tripeptide.. Cleaves the N-terminal amino acid of tripeptides. The chain is Peptidase T from Streptococcus suis (strain 98HAH33).